A 152-amino-acid polypeptide reads, in one-letter code: Large ribosomal subunit protein bL9 (152 aa).

Belongs to the bacterial ribosomal protein bL9 family.

Functionally, binds to the 23S rRNA. The protein is Large ribosomal subunit protein bL9 of Streptococcus thermophilus (strain ATCC BAA-491 / LMD-9).